A 387-amino-acid chain; its full sequence is 3-hydroxy-D-aspartate aldolase (387 aa).

Lys62 bears the N6-(pyridoxal phosphate)lysine mark. A pyridoxal 5'-phosphate-binding site is contributed by Gln85. The segment at 199–228 (HGQLRGPQGQAGRRHCPGERGRGRAGGRGL) is disordered. Pyridoxal 5'-phosphate contacts are provided by residues Thr238, 256–257 (GS), and Tyr265. Residues His355 and Asp357 each contribute to the Mg(2+) site.

The protein belongs to the DSD1 family. Homodimer. The cofactor is pyridoxal 5'-phosphate. Mn(2+) serves as cofactor. It depends on Mg(2+) as a cofactor. Co(2+) is required as a cofactor.

The enzyme catalyses (3S)-3-hydroxy-D-aspartate = glyoxylate + glycine. It carries out the reaction (3R)-3-hydroxy-D-aspartate = glyoxylate + glycine. Catalyzes the condensation of glyoxylate and glycine into (2R,3S)-beta-hydroxyaspartate ((3S)-3-hydroxy-D-aspartate). Functions in glyoxylate assimilation via the beta-hydroxyaspartate cycle (BHAC). In vitro catalyzes the cleavage of both D-erythro- and D-threo-3-hydroxyaspartate to glycine and glyoxylate. Also acts on D-threonine, D-3-phenylserine and D-3-3,4-methylenedioxyphenylserine. This Paracoccus denitrificans protein is 3-hydroxy-D-aspartate aldolase (dhaa).